A 428-amino-acid chain; its full sequence is Adenylosuccinate synthetase (428 aa).

Residues 12–18 (GDEGKGK) and 40–42 (GHT) each bind GTP. The active-site Proton acceptor is the D13. Positions 13 and 40 each coordinate Mg(2+). IMP contacts are provided by residues 13 to 16 (DEGK), 38 to 41 (NAGH), T130, R144, Q225, T240, and R304. The Proton donor role is filled by H41. 300–306 (VTTGRAR) provides a ligand contact to substrate. GTP is bound by residues R306, 332-334 (KID), and 414-416 (SVG).

This sequence belongs to the adenylosuccinate synthetase family. Homodimer. Requires Mg(2+) as cofactor.

The protein localises to the cytoplasm. The catalysed reaction is IMP + L-aspartate + GTP = N(6)-(1,2-dicarboxyethyl)-AMP + GDP + phosphate + 2 H(+). It participates in purine metabolism; AMP biosynthesis via de novo pathway; AMP from IMP: step 1/2. In terms of biological role, plays an important role in the de novo pathway of purine nucleotide biosynthesis. Catalyzes the first committed step in the biosynthesis of AMP from IMP. The polypeptide is Adenylosuccinate synthetase (Clostridium botulinum (strain Okra / Type B1)).